We begin with the raw amino-acid sequence, 376 residues long: Pre-mRNA-splicing factor cwf25 (376 aa).

A coiled-coil region spans residues lysine 25–alanine 60. Disordered stretches follow at residues leucine 153–asparagine 211 and arginine 258–arginine 289. Residues methionine 154–serine 167 show a composition bias toward basic and acidic residues. Residues lysine 168–arginine 178 show a composition bias toward basic residues. Positions serine 179–glutamate 199 are enriched in basic and acidic residues. Phosphoserine occurs at positions 266 and 268. Residues isoleucine 286–arginine 334 are a coiled coil.

Belongs to the CWC25 family. As to quaternary structure, belongs to the 40S cdc5-associated complex (or cwf complex), a spliceosome sub-complex reminiscent of a late-stage spliceosome composed of the U2, U5 and U6 snRNAs and at least brr2, cdc5, cwf2/prp3, cwf3/syf1, cwf4/syf3, cwf5/ecm2, spp42/cwf6, cwf7/spf27, cwf8, cwf9, cwf10, cwf11, cwf12, prp45/cwf13, cwf14, cwf15, cwf16, cwf17, cwf18, cwf19, cwf20, cwf21, cwf22, cwf23, cwf24, cwf25, cwf26, cyp7/cwf27, cwf28, cwf29/ist3, lea1, msl1, prp5/cwf1, prp10, prp12/sap130, prp17, prp22, sap61, sap62, sap114, sap145, slu7, smb1, smd1, smd3, smf1, smg1 and syf2.

It is found in the nucleus. Involved in mRNA splicing. The sequence is that of Pre-mRNA-splicing factor cwf25 (cwf25) from Schizosaccharomyces pombe (strain 972 / ATCC 24843) (Fission yeast).